A 693-amino-acid polypeptide reads, in one-letter code: Guanyl-specific ribonuclease pgl-3 (693 aa).

The interval 205-447 (KKLMIEGPKI…VNRIIESLEK (243 aa)) is involved in dimerization. Residue histidine 437 is the Proton acceptor of the active site. Disordered stretches follow at residues 445-468 (LEKS…GPTT), 523-591 (AEKN…DATP), and 620-693 (SSNG…RGGS). The span at 447 to 468 (KSSSSEPSATAKQTTTSNGPTT) shows a compositional bias: low complexity. Composition is skewed to polar residues over residues 528–548 (NTPS…SPTK) and 569–580 (ITKVSPQPQERT). The required for interaction with sepa-1 stretch occupies residues 581–614 (GTAWGSGDATPVPLATPVNEYKVSGFGAAPVASG). Composition is skewed to gly residues over residues 625 to 634 (SGRGSYGGGR), 641 to 660 (RGAY…SRGY), and 668 to 693 (RGSY…RGGS). Residues 633–693 (GRGGDRGGRG…GFFGGSRGGS (61 aa)) are RNA-binding RGG-box.

May form a homodimer. Interacts with pgl-1 and pgl-2; this association is not required for P-granule localization of either pgl-1 or pgl-2. Interacts with sepa-1; the interaction is enhanced in the presence of RNA. Interacts with prmt-1; the interaction is direct. Post-translationally, methylated at arginine residues in the RNA-binding RGG-box by prmt-1. Methylation promotes P-granule degradation by autophagy. As to expression, highly expressed in the germline. Expressed in most somatic cells.

It is found in the cytoplasmic granule. The catalysed reaction is [RNA] containing guanosine + H2O = an [RNA fragment]-3'-guanosine-3'-phosphate + a 5'-hydroxy-ribonucleotide-3'-[RNA fragment].. Functionally, guanyl-specific endoribonuclease which cleaves the phosphodiester bond in single-stranded RNA between the 3'-guanylic residue and the 5'-OH residue of adjacent nucleotide, resulting in the formation of a corresponding 2',3'-cyclic phosphate intermediate. P-granule component involved in germline development. Together with the P-granule component pgl-1, is involved in the formation of P-granules. Together with pgl-1, probably recruits other granule components such as pos-1, mex-3 and glh-1, and RNA to P-granules. In vitro, binds mRNA; this interaction is required for the formation of liquid-like droplets that resemble P-granules. Most likely recruits pgl-1 into P-granules during autophagy. Associates with adapters such as sepa-1 and is required for the accumulation and degradation of P-granules by autophagy in somatic cells. This ensures exclusive localization of the P-granules in germ cells. In addition, may act redundantly with pgl-1 to protect germ cells from excessive germline apoptosis during normal oogenesis and development of the two gonadal arms. This may in part be through regulating the localization of sir-2.1 which is involved in germ cell apoptosis. May protect somatic cells from excessive apoptosis during normal development. In Caenorhabditis elegans, this protein is Guanyl-specific ribonuclease pgl-3.